A 274-amino-acid chain; its full sequence is 2,3,4,5-tetrahydropyridine-2,6-dicarboxylate N-succinyltransferase (274 aa).

Substrate contacts are provided by R104 and D141.

It belongs to the transferase hexapeptide repeat family. Homotrimer.

Its subcellular location is the cytoplasm. The catalysed reaction is (S)-2,3,4,5-tetrahydrodipicolinate + succinyl-CoA + H2O = (S)-2-succinylamino-6-oxoheptanedioate + CoA. It functions in the pathway amino-acid biosynthesis; L-lysine biosynthesis via DAP pathway; LL-2,6-diaminopimelate from (S)-tetrahydrodipicolinate (succinylase route): step 1/3. This Escherichia coli O157:H7 protein is 2,3,4,5-tetrahydropyridine-2,6-dicarboxylate N-succinyltransferase (dapD).